Consider the following 229-residue polypeptide: Transmembrane emp24 domain-containing protein 5 (229 aa).

An N-terminal signal peptide occupies residues 1 to 27 (MGDKIWLPFPVLLLAALPPVLLPGAAG). Residues 28–196 (FTPSLDSDFT…IQESNFDRVN (169 aa)) lie on the Lumenal side of the membrane. The GOLD domain occupies 45-126 (KECFYQPMPL…EKVIFFELIL (82 aa)). A helical membrane pass occupies residues 197–217 (FWSMVNLVVMVVVSAIQVYML). The Cytoplasmic segment spans residues 218–229 (KSLFEDKRKSRT).

This sequence belongs to the EMP24/GP25L family. As to quaternary structure, interacts with TMED9 and TMED10.

The protein localises to the endoplasmic reticulum membrane. It is found in the golgi apparatus. Its subcellular location is the cis-Golgi network membrane. The protein resides in the endoplasmic reticulum-Golgi intermediate compartment membrane. Potential role in vesicular protein trafficking, mainly in the early secretory pathway. Required for the maintenance of the Golgi apparatus; involved in protein exchange between Golgi stacks during assembly. Probably not required for COPI-vesicle-mediated retrograde transport. The polypeptide is Transmembrane emp24 domain-containing protein 5 (TMED5) (Homo sapiens (Human)).